The sequence spans 425 residues: Serine hydroxymethyltransferase (425 aa).

Residues L124 and 128 to 130 (GHL) each bind (6S)-5,6,7,8-tetrahydrofolate. K233 is subject to N6-(pyridoxal phosphate)lysine.

It belongs to the SHMT family. In terms of assembly, homodimer. It depends on pyridoxal 5'-phosphate as a cofactor.

The protein localises to the cytoplasm. It carries out the reaction (6R)-5,10-methylene-5,6,7,8-tetrahydrofolate + glycine + H2O = (6S)-5,6,7,8-tetrahydrofolate + L-serine. Its pathway is one-carbon metabolism; tetrahydrofolate interconversion. It functions in the pathway amino-acid biosynthesis; glycine biosynthesis; glycine from L-serine: step 1/1. Functionally, catalyzes the reversible interconversion of serine and glycine with tetrahydrofolate (THF) serving as the one-carbon carrier. This reaction serves as the major source of one-carbon groups required for the biosynthesis of purines, thymidylate, methionine, and other important biomolecules. Also exhibits THF-independent aldolase activity toward beta-hydroxyamino acids, producing glycine and aldehydes, via a retro-aldol mechanism. The chain is Serine hydroxymethyltransferase from Clavibacter michiganensis subsp. michiganensis (strain NCPPB 382).